The chain runs to 182 residues: uncharacterized protein (182 aa).

Disordered stretches follow at residues Met-1–Leu-73 and Ser-105–Arg-182. 2 stretches are compositionally biased toward low complexity: residues Arg-43–Ser-68 and Ser-105–Thr-121. Positions Ala-122–Ser-131 are enriched in pro residues.

This is an uncharacterized protein from Caenorhabditis elegans.